We begin with the raw amino-acid sequence, 381 residues long: MNLNFMPLLHAYNHASIDFHFNSSARDFCVHEVPLYEFSNTGEHAVIQVRKSGLSTLEMLHIFSQILGVKIAELGYAGLKDKNALTTQFISLPKKYAPLLEKNTSNFQERNLKVLSLNYHHNKIKLGHLKGNRFFMRFKKMTPLNAQKTKQVLEQIAQFGMPNYFGSQRFGKFNDNHKEGLKILQNKTKFAHQKLNAFLISSYQSYLFNSLLSKRLEISKIISDFSVKENLEFFKQKNLSVNSNALKALKNQAHPFKILEGDVMCHYPYGKFFDALKLEKESERFLKKEAVPTGLLDGKKALYAKNLSLEIEKEFQHNLLSSHAKTLGSRRFFWVFAENVTSQYIKEKAQFELGFYLPKGSYASALLKEIKHEKGENNDEF.

Asp-81 acts as the Nucleophile in catalysis. Residues 160–335 enclose the TRUD domain; that stretch reads GMPNYFGSQR…TLGSRRFFWV (176 aa).

This sequence belongs to the pseudouridine synthase TruD family.

The enzyme catalyses uridine(13) in tRNA = pseudouridine(13) in tRNA. Its function is as follows. Responsible for synthesis of pseudouridine from uracil-13 in transfer RNAs. This Helicobacter pylori (strain G27) protein is tRNA pseudouridine synthase D.